We begin with the raw amino-acid sequence, 393 residues long: Formate-dependent phosphoribosylglycinamide formyltransferase (393 aa).

N(1)-(5-phospho-beta-D-ribosyl)glycinamide is bound by residues 22 to 23 (EL) and E82. Residues R114, K155, 160–165 (SSGKGQ), 195–198 (EGFI), and E203 contribute to the ATP site. One can recognise an ATP-grasp domain in the interval 119–308 (RLAAEELDLP…QFALHARAIL (190 aa)). Positions 267 and 279 each coordinate Mg(2+). N(1)-(5-phospho-beta-D-ribosyl)glycinamide-binding positions include D286, K356, and 363 to 364 (RR).

Belongs to the PurK/PurT family. As to quaternary structure, homodimer.

The catalysed reaction is N(1)-(5-phospho-beta-D-ribosyl)glycinamide + formate + ATP = N(2)-formyl-N(1)-(5-phospho-beta-D-ribosyl)glycinamide + ADP + phosphate + H(+). It participates in purine metabolism; IMP biosynthesis via de novo pathway; N(2)-formyl-N(1)-(5-phospho-D-ribosyl)glycinamide from N(1)-(5-phospho-D-ribosyl)glycinamide (formate route): step 1/1. Involved in the de novo purine biosynthesis. Catalyzes the transfer of formate to 5-phospho-ribosyl-glycinamide (GAR), producing 5-phospho-ribosyl-N-formylglycinamide (FGAR). Formate is provided by PurU via hydrolysis of 10-formyl-tetrahydrofolate. The chain is Formate-dependent phosphoribosylglycinamide formyltransferase from Pseudomonas putida (strain ATCC 47054 / DSM 6125 / CFBP 8728 / NCIMB 11950 / KT2440).